A 444-amino-acid chain; its full sequence is Presenilin sel-12 (444 aa).

Residues 1 to 45 (MPSTRRQQEGGGADAETHTVYGTNLITNRNSQEDENVVEEAELKY) lie on the Cytoplasmic side of the membrane. The helical transmembrane segment at 46 to 66 (GASHVIHLFVPVSLCMALVVF) threads the bilayer. The Lumenal portion of the chain corresponds to 67 to 101 (TMNTITFYSQNNGRHLLYTPFVRETDSIVEKGLMS). The helical transmembrane segment at 102 to 122 (LGNALVMLCVVVLMTVLLIVF) threads the bilayer. The Cytoplasmic segment spans residues 123-130 (YKYKFYKL). Residues 131–151 (IHGWLIVSSFLLLFLFTTIYV) form a helical membrane-spanning segment. The Lumenal portion of the chain corresponds to 152-163 (QEVLKSFDVSPS). The helical transmembrane segment at 164–184 (ALLVLFGLGNYGVLGMMCIHW) threads the bilayer. Residues 185-189 (KGPLR) lie on the Cytoplasmic side of the membrane. The chain crosses the membrane as a helical span at residues 190–210 (LQQFYLITMSALMALVFIKYL). Residues 211 to 212 (PE) lie on the Lumenal side of the membrane. A helical transmembrane segment spans residues 213 to 233 (WTVWFVLFVISVWDLVAVLTP). Asp226 is an active-site residue. The Cytoplasmic portion of the chain corresponds to 234–359 (KGPLRYLVET…RHEEEERGVK (126 aa)). Positions 275–331 (TDPREPTSSDSNTSTAFPGEASCSSETPKRPKVKRIPQKVQIESNTTASTTQNSGVR) are disordered. Polar residues-rich tracts occupy residues 282–300 (SSDS…CSSE) and 315–329 (QIES…QNSG). The helical transmembrane segment at 360-380 (LGLGDFIFYSVLLGKASSYFD) threads the bilayer. Asp364 is an active-site residue. Over 381 to 384 (WNTT) the chain is Lumenal. The helical transmembrane segment at 385-405 (IACYVAILIGLCFTLVLLAVF) threads the bilayer. Over 406–413 (KRALPALP) the chain is Cytoplasmic. Residues 410-412 (PAL) carry the PAL motif. An intramembrane region (helical) is located at residues 414–434 (ISIFSGLIFYFCTRWIITPFV). Topologically, residues 435-444 (TQVSQKCLLY) are cytoplasmic.

It belongs to the peptidase A22A family. Homodimer. Component of the gamma-secretase complex, a complex probably composed of the presenilin homodimer (sel-12, hop-1 or spe-4), nicastrin (aph-2), aph-1 and pen-2. Interacts with sel-10. Expressed in most neurons.

Its subcellular location is the endoplasmic reticulum membrane. It localises to the golgi apparatus membrane. Probable catalytic subunit of the gamma-secretase complex, an endoprotease complex that catalyzes the intramembrane cleavage of integral membrane proteins such as Notch receptors (lin-12 or glp-1). Provides the major presenilin function compared to hop-1 and spe-4. Required cell-autonomously for correct neurite connectivity of the AIY cholinergic interneurons and their correct functioning in thermotaxis. Required for mesodermal patterning of muscle function. Promotes basement membrane gap formation during tissue remodeling. This chain is Presenilin sel-12, found in Caenorhabditis elegans.